The following is a 162-amino-acid chain: 2-C-methyl-D-erythritol 2,4-cyclodiphosphate synthase (162 aa).

Residues Asp12 and His14 each coordinate a divalent metal cation. Residues 12-14 (DVH) and 38-39 (HS) contribute to the 4-CDP-2-C-methyl-D-erythritol 2-phosphate site. Position 46 (His46) interacts with a divalent metal cation. Residues 60–62 (DIG), 65–69 (FPDTD), and Arg146 each bind 4-CDP-2-C-methyl-D-erythritol 2-phosphate.

It belongs to the IspF family. Homotrimer. Requires a divalent metal cation as cofactor.

The catalysed reaction is 4-CDP-2-C-methyl-D-erythritol 2-phosphate = 2-C-methyl-D-erythritol 2,4-cyclic diphosphate + CMP. It participates in isoprenoid biosynthesis; isopentenyl diphosphate biosynthesis via DXP pathway; isopentenyl diphosphate from 1-deoxy-D-xylulose 5-phosphate: step 4/6. Involved in the biosynthesis of isopentenyl diphosphate (IPP) and dimethylallyl diphosphate (DMAPP), two major building blocks of isoprenoid compounds. Catalyzes the conversion of 4-diphosphocytidyl-2-C-methyl-D-erythritol 2-phosphate (CDP-ME2P) to 2-C-methyl-D-erythritol 2,4-cyclodiphosphate (ME-CPP) with a corresponding release of cytidine 5-monophosphate (CMP). The chain is 2-C-methyl-D-erythritol 2,4-cyclodiphosphate synthase from Bordetella avium (strain 197N).